The following is a 148-amino-acid chain: Deoxyuridine 5'-triphosphate nucleotidohydrolase (148 aa).

Substrate is bound by residues 68–70 (RSG), Asn-81, 85–87 (TID), and Lys-95.

This sequence belongs to the dUTPase family. It depends on Mg(2+) as a cofactor.

It catalyses the reaction dUTP + H2O = dUMP + diphosphate + H(+). It functions in the pathway pyrimidine metabolism; dUMP biosynthesis; dUMP from dCTP (dUTP route): step 2/2. Functionally, this enzyme is involved in nucleotide metabolism: it produces dUMP, the immediate precursor of thymidine nucleotides and it decreases the intracellular concentration of dUTP so that uracil cannot be incorporated into DNA. The chain is Deoxyuridine 5'-triphosphate nucleotidohydrolase from Rickettsia typhi (strain ATCC VR-144 / Wilmington).